The primary structure comprises 142 residues: Metallothiol transferase FosB (142 aa).

Residues 5 to 120 (SVNHICFSVS…DGHKIELHTG (116 aa)) form the VOC domain. Mg(2+) contacts are provided by His8, His67, and Glu116. Glu116 (proton donor/acceptor) is an active-site residue.

The protein belongs to the fosfomycin resistance protein family. FosB subfamily. Homodimer. It depends on Mg(2+) as a cofactor.

It is found in the cytoplasm. Metallothiol transferase which confers resistance to fosfomycin by catalyzing the addition of a thiol cofactor to fosfomycin. L-cysteine is probably the physiological thiol donor. The polypeptide is Metallothiol transferase FosB (Staphylococcus epidermidis (strain ATCC 12228 / FDA PCI 1200)).